Reading from the N-terminus, the 236-residue chain is Dense granule protein 7 (236 aa).

The N-terminal stretch at 1–26 (MARHAIFSALCVLGLVAAALPQFATA) is a signal peptide. Residues 45 to 106 (DGQAPVDSLR…EVHFRKRGVR (62 aa)) form a disordered region. Residues 70 to 80 (TTSMDKASVES) are compositionally biased toward polar residues. The segment at 147–236 (AVGMGASYFA…SGEDGEDARQ (90 aa)) is required for dimerization, interactions with liposomes and liposome tubulation. A helical transmembrane segment spans residues 181-201 (VGTVLGFAALAAAAAFLGMGL). Positions 208–236 (FSPRKNRSRQPALEQEVPESGEDGEDARQ) are disordered. A glycan (N-linked (GlcNAc...) asparagine) is linked at asparagine 213. Over residues 223-236 (EVPESGEDGEDARQ) the composition is skewed to acidic residues.

Belongs to the Gra7 family. In terms of assembly, homodimer. Can form higher order homooligomers in a lipid-stimulated manner. Component of a complex at least composed of ROP18, GRA7 and ROP2. Interacts with ROP5. Interacts with ROP18 in the absence of ROP5. Interacts with mouse IRGA6/IIGP1 in GTP-dependent manner; the interaction results in faster turnover of the GTP-activated IRGA6/IIGP1 oligomer. Interacts with mouse TRAF6 (via N-terminal RING domain); the interaction plays a role in GRA7-induced pro-inflammatory cytokine production in mouse macrophages.

The protein localises to the secreted. Its subcellular location is the parasitophorous vacuole lumen. The protein resides in the parasitophorous vacuole membrane. It localises to the cytoplasm. It is found in the host cytoplasm. The protein localises to the cytoplasmic vesicle. Its subcellular location is the secretory vesicle. Functionally, binds lipid bilayers, sequesters host endocytic organelles in the parasitophorous vacuole space, and causes their deformation and remodeling. Plays a role in nutrient acquisition from the host. In complex with ROP18, targets immunity-related GTPases (IRGs) to prevent IRG-mediated parasite killing by mouse cells. Important component within a kinase complex, contributing to phosphorylation of mouse IRGA6/IIGP1, an immunity-related GTPase that protects mice from infection by certain intracellular pathogens, by Toxoplasma gondii ROP5 and ROP18. Induces pro-inflammatory cytokine production in host macrophages. Activates host pro-inflammatory signaling pathways in a MyD88-dependent manner. Triggers generation of reactive oxygen species (ROS) in host cells. Activates MAPK pathway in host cells. Activates host NF-kappa-B signaling pathway by interacting with TRAF6 and modulating the 'Lys-63'-linked polyubiquitination of TRAF6. The polypeptide is Dense granule protein 7 (Toxoplasma gondii).